The primary structure comprises 98 residues: U-scoloptoxin(16)-Er9a (98 aa).

The first 24 residues, 1–24 (MVSYLCMSVSSGWLSIGKIAIKDG), serve as a signal peptide directing secretion.

The protein belongs to the scoloptoxin-16 family. Contains 4 disulfide bonds. In terms of tissue distribution, expressed by the venom gland.

Its subcellular location is the secreted. The sequence is that of U-scoloptoxin(16)-Er9a from Ethmostigmus rubripes (Giant centipede).